Consider the following 314-residue polypeptide: Inositol oxygenase 5 (314 aa).

Substrate contacts are provided by residues Arg-54 and 112–114; that span reads DES. His-125, His-150, and Asp-151 together coordinate Fe cation. Substrate-binding positions include Lys-154 and 171 to 172; that span reads GD. 3 residues coordinate Fe cation: His-223, His-249, and Asp-282. Position 249-250 (249-250) interacts with substrate; sequence HS.

Belongs to the myo-inositol oxygenase family. It depends on Fe cation as a cofactor. As to expression, expressed in flowers and siliques.

The protein resides in the cytoplasm. The catalysed reaction is myo-inositol + O2 = D-glucuronate + H2O + H(+). It participates in polyol metabolism; myo-inositol degradation into D-glucuronate; D-glucuronate from myo-inositol: step 1/1. Functionally, involved in the biosynthesis of UDP-glucuronic acid (UDP-GlcA), providing nucleotide sugars for cell-wall polymers. May be also involved in plant ascorbate biosynthesis. This is Inositol oxygenase 5 (MIOX5) from Arabidopsis thaliana (Mouse-ear cress).